The following is a 256-amino-acid chain: N-acetylglucosaminyldiphosphoundecaprenol N-acetyl-beta-D-mannosaminyltransferase (256 aa).

It belongs to the glycosyltransferase 26 family. TagA/TarA subfamily.

It carries out the reaction UDP-N-acetyl-alpha-D-mannosamine + N-acetyl-alpha-D-glucosaminyl-di-trans,octa-cis-undecaprenyl diphosphate = N-acetyl-beta-D-mannosaminyl-(1-&gt;4)-N-acetyl-alpha-D-glucosaminyl di-trans,octa-cis-undecaprenyl diphosphate + UDP + H(+). It functions in the pathway cell wall biogenesis; poly(glycerol phosphate) teichoic acid biosynthesis. In terms of biological role, catalyzes the conversion of GlcNAc-PP-undecaprenol into ManNAc-GlcNAc-PP-undecaprenol, the first committed lipid intermediate in the de novo synthesis of teichoic acid. The chain is N-acetylglucosaminyldiphosphoundecaprenol N-acetyl-beta-D-mannosaminyltransferase from Bacillus subtilis (strain 168).